A 405-amino-acid chain; its full sequence is Probable tRNA sulfurtransferase (405 aa).

The THUMP domain maps to 60-165 (VPVAESLKQI…EEAAYLSYEN (106 aa)). Residues 183–184 (ML), 208–209 (HF), R265, G287, and Q296 contribute to the ATP site.

Belongs to the ThiI family.

It is found in the cytoplasm. The enzyme catalyses [ThiI sulfur-carrier protein]-S-sulfanyl-L-cysteine + a uridine in tRNA + 2 reduced [2Fe-2S]-[ferredoxin] + ATP + H(+) = [ThiI sulfur-carrier protein]-L-cysteine + a 4-thiouridine in tRNA + 2 oxidized [2Fe-2S]-[ferredoxin] + AMP + diphosphate. It catalyses the reaction [ThiS sulfur-carrier protein]-C-terminal Gly-Gly-AMP + S-sulfanyl-L-cysteinyl-[cysteine desulfurase] + AH2 = [ThiS sulfur-carrier protein]-C-terminal-Gly-aminoethanethioate + L-cysteinyl-[cysteine desulfurase] + A + AMP + 2 H(+). Its pathway is cofactor biosynthesis; thiamine diphosphate biosynthesis. Functionally, catalyzes the ATP-dependent transfer of a sulfur to tRNA to produce 4-thiouridine in position 8 of tRNAs, which functions as a near-UV photosensor. Also catalyzes the transfer of sulfur to the sulfur carrier protein ThiS, forming ThiS-thiocarboxylate. This is a step in the synthesis of thiazole, in the thiamine biosynthesis pathway. The sulfur is donated as persulfide by IscS. The sequence is that of Probable tRNA sulfurtransferase from Streptococcus mutans serotype c (strain ATCC 700610 / UA159).